Consider the following 633-residue polypeptide: Extracellular metalloproteinase 3 (633 aa).

The signal sequence occupies residues 1–18 (MHGLLLAGLLALPMNVLA). Positions 19-246 (YPAEQHASNV…VHNVVDYVAS (228 aa)) are excised as a propeptide. Residue N410 is glycosylated (N-linked (GlcNAc...) asparagine). H429 serves as a coordination point for Zn(2+). E430 is an active-site residue. H433 serves as a coordination point for Zn(2+). N-linked (GlcNAc...) asparagine glycans are attached at residues N480 and N622.

The protein belongs to the peptidase M36 family. Requires Zn(2+) as cofactor.

It is found in the secreted. Functionally, secreted metalloproteinase probably acting as a virulence factor. This chain is Extracellular metalloproteinase 3 (MEP3), found in Trichophyton rubrum (Athlete's foot fungus).